Reading from the N-terminus, the 239-residue chain is Putative ABC transporter ATP-binding protein AlbC (239 aa).

An ABC transporter domain is found at 4–238 (LDIHDVSVWY…RREFFEVIGH (235 aa)). 37–44 (GVNGAGKT) contacts ATP.

The protein belongs to the ABC transporter superfamily.

Functionally, involved in the production of the bacteriocin subtilosin. Required for immunity to subtilosin. The chain is Putative ABC transporter ATP-binding protein AlbC (albC) from Bacillus subtilis (strain 168).